Reading from the N-terminus, the 595-residue chain is Pyranose dehydrogenase (595 aa).

Residues 1–21 (MARFNARLFSIAILGFQVARS) form the signal peptide. 2 N-linked (GlcNAc...) asparagine glycosylation sites follow: Asn-95 and Asn-110. His-123 carries the tele-8alpha-FAD histidine modification. N-linked (GlcNAc...) asparagine glycans are attached at residues Asn-195, Asn-337, Asn-367, Asn-502, and Asn-510. The active-site Proton acceptor is His-530. A glycan (N-linked (GlcNAc...) asparagine) is linked at Asn-541. The active site involves His-574.

It belongs to the GMC oxidoreductase family. As to quaternary structure, monomer. FAD serves as cofactor. N-glycosylated.

It is found in the secreted. It carries out the reaction pyranose + acceptor = pyranos-2-ulose + reduced acceptor.. The enzyme catalyses pyranose + acceptor = pyranos-3-ulose + reduced acceptor.. It catalyses the reaction pyranose + acceptor = pyranos-2,3-diulose + reduced acceptor.. The catalysed reaction is a pyranoside + acceptor = a pyranosid-3-ulose + reduced acceptor.. It carries out the reaction a pyranoside + acceptor = a pyranosid-3,4-diulose + reduced acceptor.. Catalyzes the single-oxidation or sequential double oxidation reaction of carbohydrates primarily at carbon-2 and/or carbon-3 with the concomitant reduction of the flavin. The enzyme exhibits a broad sugar substrate specificity, oxidizing different aldopyranoses to the corresponding C-1, C-2, C-3 or C-1,2, C-2,3 and C-3,4 (di)dehydro sugars with substrate-specific regioselectivity. Accepts only a narrow range of electron acceptors such as substituted benzoquinones and complexed metal ions and reacts extremely slowly with O(2) as acceptor. May play a role in the natural recycling of plant matter by oxidizing all major monosaccharides in lignocellulose and by reducing quinone compounds or reactive radical species generated during lignin depolymerization. The sequence is that of Pyranose dehydrogenase from Agaricus campestris (Field mushroom).